The primary structure comprises 85 residues: CRISPR-associated endoribonuclease Cas2 2 (85 aa).

Position 8 (D8) interacts with Mg(2+).

The protein belongs to the CRISPR-associated endoribonuclease Cas2 protein family. Homodimer, forms a heterotetramer with a Cas1 homodimer. It depends on Mg(2+) as a cofactor.

Functionally, CRISPR (clustered regularly interspaced short palindromic repeat), is an adaptive immune system that provides protection against mobile genetic elements (viruses, transposable elements and conjugative plasmids). CRISPR clusters contain sequences complementary to antecedent mobile elements and target invading nucleic acids. CRISPR clusters are transcribed and processed into CRISPR RNA (crRNA). Functions as a ssRNA-specific endoribonuclease. Involved in the integration of spacer DNA into the CRISPR cassette. The sequence is that of CRISPR-associated endoribonuclease Cas2 2 from Chloroflexus aurantiacus (strain ATCC 29366 / DSM 635 / J-10-fl).